A 40-amino-acid polypeptide reads, in one-letter code: Ice-structuring protein GS-8 (40 aa).

Met-1 is subject to Blocked amino end (Met).

Belongs to the type-I AFP family.

Antifreeze proteins lower the blood freezing point. The sequence is that of Ice-structuring protein GS-8 from Myoxocephalus aenaeus (Grubby sculpin).